We begin with the raw amino-acid sequence, 348 residues long: Alcohol dehydrogenase 1 (348 aa).

C44, H67, C98, C101, C104, C112, and C154 together coordinate Zn(2+). Residues 178 to 184 (GAGGGLG), D202, K207, 269 to 271 (VGL), and R341 contribute to the NAD(+) site.

This sequence belongs to the zinc-containing alcohol dehydrogenase family. In terms of assembly, homotetramer. Zn(2+) is required as a cofactor.

It localises to the cytoplasm. The enzyme catalyses a primary alcohol + NAD(+) = an aldehyde + NADH + H(+). The catalysed reaction is a secondary alcohol + NAD(+) = a ketone + NADH + H(+). Converts ethanol to acetaldehyde and plays a major role in xylose fermentation. This is Alcohol dehydrogenase 1 (ADH1) from Scheffersomyces stipitis (strain ATCC 58785 / CBS 6054 / NBRC 10063 / NRRL Y-11545) (Yeast).